Here is a 705-residue protein sequence, read N- to C-terminus: Phosphoribosylformylglycinamidine synthase subunit PurL (705 aa).

His32 is an active-site residue. Tyr35 serves as a coordination point for ATP. A Mg(2+)-binding site is contributed by Glu76. Substrate-binding positions include 77-80 and Arg99; that span reads SHNH. The active-site Proton acceptor is His78. Position 100 (Asp100) interacts with Mg(2+). Residue Gln224 participates in substrate binding. Asp252 is a binding site for Mg(2+). 296–298 provides a ligand contact to substrate; that stretch reads ESQ. Positions 471 and 508 each coordinate ATP. Asn509 provides a ligand contact to Mg(2+). Ser511 serves as a coordination point for substrate.

The protein belongs to the FGAMS family. In terms of assembly, monomer. Part of the FGAM synthase complex composed of 1 PurL, 1 PurQ and 2 PurS subunits.

Its subcellular location is the cytoplasm. The catalysed reaction is N(2)-formyl-N(1)-(5-phospho-beta-D-ribosyl)glycinamide + L-glutamine + ATP + H2O = 2-formamido-N(1)-(5-O-phospho-beta-D-ribosyl)acetamidine + L-glutamate + ADP + phosphate + H(+). It participates in purine metabolism; IMP biosynthesis via de novo pathway; 5-amino-1-(5-phospho-D-ribosyl)imidazole from N(2)-formyl-N(1)-(5-phospho-D-ribosyl)glycinamide: step 1/2. Part of the phosphoribosylformylglycinamidine synthase complex involved in the purines biosynthetic pathway. Catalyzes the ATP-dependent conversion of formylglycinamide ribonucleotide (FGAR) and glutamine to yield formylglycinamidine ribonucleotide (FGAM) and glutamate. The FGAM synthase complex is composed of three subunits. PurQ produces an ammonia molecule by converting glutamine to glutamate. PurL transfers the ammonia molecule to FGAR to form FGAM in an ATP-dependent manner. PurS interacts with PurQ and PurL and is thought to assist in the transfer of the ammonia molecule from PurQ to PurL. The polypeptide is Phosphoribosylformylglycinamidine synthase subunit PurL (Pyrococcus abyssi (strain GE5 / Orsay)).